Reading from the N-terminus, the 578-residue chain is Acyl-CoA ligase AKT1 (578 aa).

ATP-binding positions include 210-218, 350-355, D438, R457, and K554; these read SSGTSGAQK and QCYGAT. Residues 281 to 350 form an SBD1 region; the sequence is DVEDLLSIVE…RHHPTWKTKQ (70 aa). Residues 351–413 form an SBD2 region; it reads CYGATEAGTA…VSSPSLAIGY (63 aa). The short motif at 576–578 is the Peroxisomal targeting signal type 1 element; sequence SKI.

It is found in the peroxisome. It participates in mycotoxin biosynthesis. Acyl-CoA ligase; part of the gene clusters that mediate the biosynthesis of the host-selective toxins (HSTs) AK-toxins responsible for Japanese pear black spot disease by the Japanese pear pathotype. AK-toxins are esters of 9,10-epoxy 8-hydroxy 9-methyldecatrienoic acid (EDA). On cellular level, AK-toxins affect plasma membrane of susceptible cells and cause a sudden increase in loss of K(+) after a few minutes of toxin treatment. The acyl-CoA ligase AKT1, the hydrolase AKT2 and enoyl-CoA hydratase AKT3 are all involved in the biosynthesis of the AK-, AF- and ACT-toxin common 9,10-epoxy-8-hydroxy-9-methyl-decatrienoic acid (EDA) structural moiety. Part of the EDA biosynthesis occurs in the peroxisome since these 3 enzymes are localized in peroxisomes. The exact roles of the 3 enzymes, as well as of additional AK-toxin clusters enzymes, including AKT4, AKT6 and AKTS1, have still to be elucidated. The Cytochrome P450 monooxygenase AKT7 on the other side functions to limit production of EDA and AK-toxin, probably via the catalysis of a side reaction of EDA or its precursor. The chain is Acyl-CoA ligase AKT1 from Alternaria alternata (Alternaria rot fungus).